The primary structure comprises 387 residues: MTSTPTALSIAQDLLRCPSVTPADAGALDVLETLLKGAGFTVHRVTFSEPGTADIDNLYARIGNTSPHLCFAGHTDVVPPGDASAWTHGAFAGDVADGLLYGRGAVDMKGGIACAVAATLDYLAANGGQPKGSISFLITGDEEDVAVNGTVKLLQWAAERGEQFDHCIVGEPSNVETIGDTIKIGRRGSQSGVLIVDGVQGHVAYPHRAANPVPDIARLITTLNDEPLDHGSAQFQPSNLEFTSVDVGNPATNVIPAQARAKFNIRFNDHHTQETLKALVEQRLAAACGNRIRAHIEWLPSNADVFVTKPGAFTDLVGAAIAEVTGRTPELNTGGGTSDARFIAKYCQVVEFGLVGQTMHQIDERTPVSDLDKLTAIYRGVLQRYFA.

Zn(2+) is bound at residue His74. Asp76 is a catalytic residue. Residue Asp107 participates in Zn(2+) binding. The active-site Proton acceptor is Glu142. Zn(2+) is bound by residues Glu143, Glu171, and His360.

The protein belongs to the peptidase M20A family. DapE subfamily. As to quaternary structure, homodimer. Zn(2+) serves as cofactor. Co(2+) is required as a cofactor.

It carries out the reaction N-succinyl-(2S,6S)-2,6-diaminopimelate + H2O = (2S,6S)-2,6-diaminopimelate + succinate. The protein operates within amino-acid biosynthesis; L-lysine biosynthesis via DAP pathway; LL-2,6-diaminopimelate from (S)-tetrahydrodipicolinate (succinylase route): step 3/3. Its function is as follows. Catalyzes the hydrolysis of N-succinyl-L,L-diaminopimelic acid (SDAP), forming succinate and LL-2,6-diaminopimelate (DAP), an intermediate involved in the bacterial biosynthesis of lysine and meso-diaminopimelic acid, an essential component of bacterial cell walls. The protein is Succinyl-diaminopimelate desuccinylase of Rhodopseudomonas palustris (strain TIE-1).